The sequence spans 663 residues: DNA topoisomerase 4 subunit B (663 aa).

ATP-binding positions include Y7, N47, D74, 114 to 120 (GLHGVGA), and K341. A disordered region spans residues 386–418 (REAARKAREDARSGKKNKRKDTLLSGKLTPAQS). Residues 387–398 (EAARKAREDARS) are compositionally biased toward basic and acidic residues. The Toprim domain occupies 424–538 (NELYLVEGDS…AGRVFIALPP (115 aa)). The Mg(2+) site is built by E430, D503, and D505.

This sequence belongs to the type II topoisomerase family. ParE type 2 subfamily. In terms of assembly, heterotetramer composed of ParC and ParE. It depends on Mg(2+) as a cofactor. The cofactor is Mn(2+). Requires Ca(2+) as cofactor.

The enzyme catalyses ATP-dependent breakage, passage and rejoining of double-stranded DNA.. In terms of biological role, topoisomerase IV is essential for chromosome segregation. It relaxes supercoiled DNA. Performs the decatenation events required during the replication of a circular DNA molecule. This chain is DNA topoisomerase 4 subunit B, found in Staphylococcus aureus (strain MRSA252).